The primary structure comprises 328 residues: D-cysteine desulfhydrase (328 aa).

K51 is modified (N6-(pyridoxal phosphate)lysine).

This sequence belongs to the ACC deaminase/D-cysteine desulfhydrase family. As to quaternary structure, homodimer. The cofactor is pyridoxal 5'-phosphate.

It catalyses the reaction D-cysteine + H2O = hydrogen sulfide + pyruvate + NH4(+) + H(+). Functionally, catalyzes the alpha,beta-elimination reaction of D-cysteine and of several D-cysteine derivatives. It could be a defense mechanism against D-cysteine. This Escherichia coli O157:H7 protein is D-cysteine desulfhydrase.